A 340-amino-acid polypeptide reads, in one-letter code: Glycerol-3-phosphate dehydrogenase [NAD(P)+] (340 aa).

Residues S14, F15, R35, and K108 each contribute to the NADPH site. Positions 108 and 136 each coordinate sn-glycerol 3-phosphate. A140 is a binding site for NADPH. K191, D244, S254, R255, and N256 together coordinate sn-glycerol 3-phosphate. Catalysis depends on K191, which acts as the Proton acceptor. R255 serves as a coordination point for NADPH. Residue E281 coordinates NADPH.

It belongs to the NAD-dependent glycerol-3-phosphate dehydrogenase family.

It is found in the cytoplasm. The enzyme catalyses sn-glycerol 3-phosphate + NAD(+) = dihydroxyacetone phosphate + NADH + H(+). The catalysed reaction is sn-glycerol 3-phosphate + NADP(+) = dihydroxyacetone phosphate + NADPH + H(+). Its pathway is membrane lipid metabolism; glycerophospholipid metabolism. Catalyzes the reduction of the glycolytic intermediate dihydroxyacetone phosphate (DHAP) to sn-glycerol 3-phosphate (G3P), the key precursor for phospholipid synthesis. The chain is Glycerol-3-phosphate dehydrogenase [NAD(P)+] from Pseudomonas aeruginosa (strain ATCC 15692 / DSM 22644 / CIP 104116 / JCM 14847 / LMG 12228 / 1C / PRS 101 / PAO1).